We begin with the raw amino-acid sequence, 116 residues long: Holo-[acyl-carrier-protein] synthase (116 aa).

Positions 5 and 50 each coordinate Mg(2+).

This sequence belongs to the P-Pant transferase superfamily. AcpS family. Requires Mg(2+) as cofactor.

The protein localises to the cytoplasm. The catalysed reaction is apo-[ACP] + CoA = holo-[ACP] + adenosine 3',5'-bisphosphate + H(+). Its function is as follows. Transfers the 4'-phosphopantetheine moiety from coenzyme A to a Ser of acyl-carrier-protein. This Nitratiruptor sp. (strain SB155-2) protein is Holo-[acyl-carrier-protein] synthase.